The chain runs to 271 residues: Zinc finger CCHC domain-containing protein 9 (271 aa).

The disordered stretch occupies residues 1–40; sequence MTRWARVSTTYNKRPLPATSWEDMKKGSFEGTSQNLPKRK. Ser48 carries the post-translational modification Phosphoserine. 4 CCHC-type zinc fingers span residues 128–145, 155–172, 184–201, and 211–228; these read MVCF…DCPA, GICY…KCKA, AKCF…SCPD, and GGCK…DCPE.

It is found in the nucleus. Its subcellular location is the nucleolus. May down-regulate transcription mediated by NF-kappa-B and the serum response element. The polypeptide is Zinc finger CCHC domain-containing protein 9 (ZCCHC9) (Homo sapiens (Human)).